We begin with the raw amino-acid sequence, 223 residues long: Deoxyribose-phosphate aldolase (223 aa).

The Proton donor/acceptor role is filled by Asp89. Residue Lys154 is the Schiff-base intermediate with acetaldehyde of the active site. The active-site Proton donor/acceptor is Lys183.

This sequence belongs to the DeoC/FbaB aldolase family. DeoC type 1 subfamily.

It is found in the cytoplasm. The enzyme catalyses 2-deoxy-D-ribose 5-phosphate = D-glyceraldehyde 3-phosphate + acetaldehyde. It functions in the pathway carbohydrate degradation; 2-deoxy-D-ribose 1-phosphate degradation; D-glyceraldehyde 3-phosphate and acetaldehyde from 2-deoxy-alpha-D-ribose 1-phosphate: step 2/2. Functionally, catalyzes a reversible aldol reaction between acetaldehyde and D-glyceraldehyde 3-phosphate to generate 2-deoxy-D-ribose 5-phosphate. This chain is Deoxyribose-phosphate aldolase, found in Thermoanaerobacter sp. (strain X514).